Consider the following 393-residue polypeptide: Phosphoglycerate kinase (393 aa).

Substrate contacts are provided by residues 22 to 24 (DFN), R37, 60 to 63 (HLGR), R119, and R152. Residues K202, G293, E324, and 350-353 (GGDS) contribute to the ATP site.

Belongs to the phosphoglycerate kinase family. In terms of assembly, monomer.

The protein resides in the cytoplasm. It catalyses the reaction (2R)-3-phosphoglycerate + ATP = (2R)-3-phospho-glyceroyl phosphate + ADP. It participates in carbohydrate degradation; glycolysis; pyruvate from D-glyceraldehyde 3-phosphate: step 2/5. The protein is Phosphoglycerate kinase of Borreliella burgdorferi (strain ZS7) (Borrelia burgdorferi).